Here is a 249-residue protein sequence, read N- to C-terminus: ATP synthase subunit a, chloroplastic (249 aa).

5 helical membrane-spanning segments follow: residues 40–60 (QVLITSWVVIAILLGSAVLAI), 97–117 (VPFIGTLFLFIFVSNWSGALL), 136–156 (INTTVALALLTSVAYFYAGLS), 201–221 (LVVVVLVSLVPLVVPIPVMFL), and 222–242 (GLFTSGIQALIFATLAAAYIG).

Belongs to the ATPase A chain family. F-type ATPases have 2 components, CF(1) - the catalytic core - and CF(0) - the membrane proton channel. CF(1) has five subunits: alpha(3), beta(3), gamma(1), delta(1), epsilon(1). CF(0) has four main subunits: a, b, b' and c.

Its subcellular location is the plastid. The protein resides in the chloroplast thylakoid membrane. Functionally, key component of the proton channel; it plays a direct role in the translocation of protons across the membrane. The sequence is that of ATP synthase subunit a, chloroplastic from Nasturtium officinale (Watercress).